Here is a 279-residue protein sequence, read N- to C-terminus: Monoacylglycerol lipase (279 aa).

Serine 110 serves as the catalytic Nucleophile. Catalysis depends on charge relay system residues aspartate 226 and histidine 256.

Belongs to the AB hydrolase superfamily. Monomer.

The protein resides in the secreted. Its subcellular location is the cell wall. The catalysed reaction is a 1-acylglycerol + H2O = glycerol + a fatty acid + H(+). It carries out the reaction Hydrolyzes glycerol monoesters of long-chain fatty acids.. It catalyses the reaction 1-butyrylglycerol + H2O = butanoate + glycerol + H(+). The enzyme catalyses 1-octanoylglycerol + H2O = octanoate + glycerol + H(+). The catalysed reaction is 1-decanoylglycerol + H2O = decanoate + glycerol + H(+). It carries out the reaction 1-dodecanoylglycerol + H2O = dodecanoate + glycerol + H(+). It catalyses the reaction 1-tetradecanoylglycerol + H2O = tetradecanoate + glycerol + H(+). The enzyme catalyses 1-(9Z-octadecenoyl)-glycerol + H2O = glycerol + (9Z)-octadecenoate + H(+). The catalysed reaction is 2-(9Z-octadecenoyl)-glycerol + H2O = glycerol + (9Z)-octadecenoate + H(+). Its activity is regulated as follows. Inhibited by the serine esterase inhibitors PMSF (100%), E600 (80%) and THL (22%). Virtual screening identified a tautomer of ZINC13451138, known inhibitor for HIV-1 integrase, as a potential inhibitor. Its function is as follows. Involved in the hydrolysis of exogenous host lipids during chronic infection. Catalyzes the hydrolysis of both monoacylglycerols (MAG) and diacylglycerols (DAG), with a preference for MAG. It hydrolyzes 2-MAG, 1-3-MAG and MAG with short, medium and long chain fatty acids such as 1-monobutyroyl-rac-glycerol (MC4), 1-mono-octanoyl-rac-glycerol (MC8), 1-monodecanoyl-rac-glycerol (MC10), 1-monolauroyl-rac-glycerol (MC12), 1-monomyristoyl-rac-glycerol (MC14) and 1-mono-oleyl-rac-glycerol (MC18:1). Also able to hydrolyze DAG with short (DiC6) and medium (DiC10) fatty acid chains, but not with longest fatty acid chains. Can also hydrolyze vinyl laurate (VC12), vinyl butyrate (VC4) and vinyl propionate (VC3). In terms of biological role, induces an inflammatory response and cell apoptosis in the host cells. Increases expression of IL-6, NF-kappaB, TLR-2, TLR-6, TNF-alpha, and MyD88 in mouse alveolar macrophage RAW264.7 cells. Persistent expression induces RAW264.7 cell apoptosis in vitro. This chain is Monoacylglycerol lipase, found in Mycobacterium tuberculosis (strain ATCC 25618 / H37Rv).